The primary structure comprises 354 residues: Probable L-ascorbate-6-phosphate lactonase UlaG (354 aa).

This sequence belongs to the UlaG family. Requires a divalent metal cation as cofactor.

It localises to the cytoplasm. The catalysed reaction is L-ascorbate 6-phosphate + H2O = 3-dehydro-L-gulonate 6-phosphate. Its pathway is cofactor degradation; L-ascorbate degradation; D-xylulose 5-phosphate from L-ascorbate: step 1/4. Probably catalyzes the hydrolysis of L-ascorbate-6-P into 3-keto-L-gulonate-6-P. Is essential for L-ascorbate utilization under anaerobic conditions. The polypeptide is Probable L-ascorbate-6-phosphate lactonase UlaG (Salmonella choleraesuis (strain SC-B67)).